The following is a 77-amino-acid chain: UPF0213 protein VNG_2274C (77 aa).

Residues 1-75 form the GIY-YIG domain; that stretch reads MHHVYVIECS…KQLSRAQKEA (75 aa).

This sequence belongs to the UPF0213 family.

In Halobacterium salinarum (strain ATCC 700922 / JCM 11081 / NRC-1) (Halobacterium halobium), this protein is UPF0213 protein VNG_2274C.